A 338-amino-acid chain; its full sequence is Glyceraldehyde-3-phosphate dehydrogenase (338 aa).

Residues 12–13, D34, and R80 each bind NAD(+); that span reads RI. D-glyceraldehyde 3-phosphate is bound by residues 151–153, T182, 211–212, and R234; these read SCT and TG. C152 serves as the catalytic Nucleophile. Residue N316 participates in NAD(+) binding.

The protein belongs to the glyceraldehyde-3-phosphate dehydrogenase family. In terms of assembly, homotetramer.

The protein resides in the cytoplasm. The catalysed reaction is D-glyceraldehyde 3-phosphate + phosphate + NAD(+) = (2R)-3-phospho-glyceroyl phosphate + NADH + H(+). The protein operates within carbohydrate degradation; glycolysis; pyruvate from D-glyceraldehyde 3-phosphate: step 1/5. The protein is Glyceraldehyde-3-phosphate dehydrogenase (GPD) of Paracoccidioides lutzii (strain ATCC MYA-826 / Pb01) (Paracoccidioides brasiliensis).